The following is a 248-amino-acid chain: Coproheme decarboxylase (248 aa).

Residues Arg-130, Tyr-144, 144 to 148 (YPMDK), Lys-148, His-171, Gln-184, and Ser-222 contribute to the Fe-coproporphyrin III site. Residue Tyr-144 is part of the active site.

Belongs to the ChdC family. Type 1 subfamily. As to quaternary structure, homopentamer. It depends on Fe-coproporphyrin III as a cofactor.

It carries out the reaction Fe-coproporphyrin III + 2 H2O2 + 2 H(+) = heme b + 2 CO2 + 4 H2O. The catalysed reaction is Fe-coproporphyrin III + H2O2 + H(+) = harderoheme III + CO2 + 2 H2O. The enzyme catalyses harderoheme III + H2O2 + H(+) = heme b + CO2 + 2 H2O. The protein operates within porphyrin-containing compound metabolism; protoheme biosynthesis. Involved in coproporphyrin-dependent heme b biosynthesis. Catalyzes the decarboxylation of Fe-coproporphyrin III (coproheme) to heme b (protoheme IX), the last step of the pathway. The reaction occurs in a stepwise manner with a three-propionate harderoheme intermediate. The sequence is that of Coproheme decarboxylase from Geobacillus stearothermophilus (strain DSM 13240 / CIP 106956 / 10).